The sequence spans 99 residues: Transmembrane protein 14A (99 aa).

A run of 3 helical transmembrane segments spans residues 1-21, 24-44, and 79-99; these read MDLIGFGYAALVTFGSILGYK, GGVPSLIAGLFVGFLAGYGAY, and PAGLVAGLSLLMILRLVLLLL.

The protein belongs to the TMEM14 family.

Its subcellular location is the mitochondrion membrane. It is found in the endoplasmic reticulum membrane. In terms of biological role, inhibits apoptosis via negative regulation of the mitochondrial outer membrane permeabilization involved in apoptotic signaling pathway. The protein is Transmembrane protein 14A (TMEM14A) of Sus scrofa (Pig).